Reading from the N-terminus, the 1488-residue chain is MAGNSLVLPIVLWGRKAPTHCISSILLTDDGGTIVTGCHDGQICLWDLSEELEVNPRALLFGHTAAITCLSKACASGDKQYTVSASANGEMCLWDVNDGRCIEFTKLACTHTGIQFYQFSVGNQREGRLLCHGHYPEILVVDATSLEVLYSLVSKISPDWISSMSIIRSHRTQEDTVVALSVTGILKVWIVTSEISGLQDTEPIFEEESKPIYCQNCQSLSFCAFTQRSLLVVCSKYWRVFDAGDYSLLCSGPSEDGQTWTGGDFVSADKVIIWTENGQSYIYKLPASCLPASDSFRSDVGKAVENLIPPVQHSLLDQKDRELVICPPVTRFFYGCKEYLHKLLIQGDSSGRLSIWNIADIADKQEANEGLKTTTCISLQDAFDKLKPCPAGIIDQLSVIPNSNEPLKVTASVYIPAHGRLVCGREDGSIIIVPATQTAIVQLLQGEHMLRRGWPPHRTLRGHRNKVTCLLYPHQVSARYDQRYLISGGVDFSVIIWDIFSGEMKHIFCVHGGEITQLLVPPENCSARVQHCVCSVASDHSVGLLSLREKKCIMLASRHLFPIQVIKWRPSDDYLVVGCTDGSVCVWQMDTGALDRCAMGITAVEILNACDEAVPAAVDSLSHPAVNLKQAMTRRSLAALKNMAHHKLQTLATNLLASEASDKGNLPKYSHNSLMVQAIKTNLTDPDIHVLFFDVEALIIQLLTEEASRPNTALISPENLQKASGSSDKGGSFLTGKRAAVLFQQVKETIKENIKEHLLDEEEDEEEVMRQRREESDPEYRASKSKPLTLLEYNLTMDTAKLFMSCLHAWGLNEVLDEVCLDRLGMLKPHCTVSFGLLSRGGHMSLMLPGYNQAAGKLLQAKAEAGRKGPATESVGKGTYTVSRAVTTQHLLSIISLANTLMSMTNATFIGDHMKKGPTRPPRPGTPDLSKARDSPPASSNIVQGQIKQAAAPVSARSAADHSGSASASPALRTCFLVNEGWSQLAAMHCVMLPDLLGLGKFRPPLLEMLARRWQDRCLEVREAAQALLLAELRRIEQAGRKETIDTWAPYLPQYMDHVISPGVTAEAMQTMAAAPDASGPEAKVQEEEHDLVDDDITTGCLSSVPQMKKMSTSYEERRKQATAIVLLGVIGAEFGAEIEPPKLLTRPRSSSQIPEGFGLTSGGSNYSLARHTCKALTFLLLQPPSPKLPPHSTIRRTAIDLIGRGFTVWEPYMDVSAVLMGLLELCADAEKQLANITMGLPLSPAADSARSARHALSLIATARPPAFITTIAKEVHRHTALAANTQSQQSIHTTTLARAKGEILRVIEILIEKMPTDVVDLLVEVMDIIMYCLEGSLVKKKGLQECFPAICRFYMVSYYERSHRIAVGARHGSVALYDIRTGKCQTIHGHKGPITAVSFAPDGRYLATYSNTDSHISFWQMNTSLLGSIGMLNSAPQLRCIKTYQVPPVQPASPGSHNALRLARLIWTSNRNVILMAHDGKEHRFMV.

WD repeat units lie at residues 17–56 (APTHCISSILLTDDGGTIVTGCHDGQICLWDLSEELEVNP), 62–104 (GHTA…CIEF), 156–199 (ISPD…SGLQ), 324–366 (VICP…DKQE), 404–443 (NEPLKVTASVYIPAHGRLVCGREDGSIIIVPATQTAIVQL), 462–507 (GHRN…MKHI), and 558–597 (RHLFPIQVIKWRPSDDYLVVGCTDGSVCVWQMDTGALDRC). Disordered regions lie at residues 761-781 (EEEDEEEVMRQRREESDPEYR) and 911-947 (GDHMKKGPTRPPRPGTPDLSKARDSPPASSNIVQGQI). Positions 768–781 (VMRQRREESDPEYR) are enriched in basic and acidic residues. Position 935 is a phosphoserine (serine 935). The segment covering 937–947 (PASSNIVQGQI) has biased composition (polar residues). WD repeat units lie at residues 1349–1388 (PAICRFYMVSYYERSHRIAVGARHGSVALYDIRTGKCQTI) and 1390–1430 (GHKG…LGSI). Serine 1454 bears the Phosphoserine mark.

This chain is WD repeat-containing protein 7 (Wdr7), found in Rattus norvegicus (Rat).